A 568-amino-acid chain; its full sequence is uncharacterized protein (568 aa).

This is an uncharacterized protein from Rickettsia prowazekii (strain Madrid E).